We begin with the raw amino-acid sequence, 537 residues long: Interleukin-2 receptor subunit beta (537 aa).

Positions 1 to 26 (MATVDLSWRLPLYILLLLLATTWVSA) are cleaved as a signal peptide. At 27–239 (AVNDCSHLKC…FRTRPADPKE (213 aa)) the chain is on the extracellular side. Cysteine 36 and cysteine 46 form a disulfide bridge. N-linked (GlcNAc...) asparagine glycosylation is found at asparagine 43, asparagine 55, and asparagine 71. Cysteine 74 and cysteine 86 are joined by a disulfide. The Fibronectin type-III domain maps to 135 to 235 (APHSLQVLHI…QPMAFRTRPA (101 aa)). Asparagine 150 is a glycosylation site (N-linked (GlcNAc...) asparagine). The WSXWS motif motif lies at 221 to 225 (WSPWS). A helical transmembrane segment spans residues 240–267 (IFPLPWLRCLLLVLGCFFGFLSCVCVLV). The Cytoplasmic portion of the chain corresponds to 268 to 537 (KCRYLGPWLK…LQAQDSAHLI (270 aa)). The Box 1 motif signature appears at 280-288 (LKCHIPDPS). 2 disordered regions span residues 442–466 (AYGN…SLAS) and 479–498 (ELGD…QASV). Residues 487–497 (MSTNSSGQQAS) are compositionally biased toward polar residues.

This sequence belongs to the type I cytokine receptor family. Type 4 subfamily. As to quaternary structure, non-covalent dimer of an alpha and a beta subunit. IL2R exists in 3 different forms: a high affinity dimer, an intermediate affinity monomer (beta subunit), and a low affinity monomer (alpha subunit). The high and intermediate affinity forms also associate with a gamma subunit. Interacts with SHB upon interleukin stimulation.

The protein localises to the cell membrane. It is found in the cell surface. In terms of biological role, receptor for interleukin-2. This beta subunit is involved in receptor mediated endocytosis and transduces the mitogenic signals of IL2. Probably in association with IL15RA, involved in the stimulation of neutrophil phagocytosis by IL15. This Rattus norvegicus (Rat) protein is Interleukin-2 receptor subunit beta (Il2rb).